A 421-amino-acid polypeptide reads, in one-letter code: 4-aminobutyrate aminotransferase PuuE (421 aa).

Pyridoxal 5'-phosphate contacts are provided by residues 110 to 111 and 238 to 241; these read GA and DEVQ. N6-(pyridoxal phosphate)lysine is present on K267. T296 provides a ligand contact to pyridoxal 5'-phosphate.

It belongs to the class-III pyridoxal-phosphate-dependent aminotransferase family. The cofactor is pyridoxal 5'-phosphate.

The enzyme catalyses 4-aminobutanoate + 2-oxoglutarate = succinate semialdehyde + L-glutamate. It functions in the pathway amine and polyamine degradation; putrescine degradation; succinate semialdehyde from 4-aminobutanoate. Its activity is regulated as follows. Completely inhibited by succinate and low-aeration conditions. Its function is as follows. Catalyzes the transfer of the amino group from gamma-aminobutyrate (GABA) to alpha-ketoglutarate (KG) to yield succinic semialdehyde (SSA). PuuE is important for utilization of putrescine as the sole nitrogen or carbon source. In Escherichia coli (strain K12), this protein is 4-aminobutyrate aminotransferase PuuE (puuE).